The sequence spans 210 residues: dTTP/UTP pyrophosphatase (210 aa).

Aspartate 89 (proton acceptor) is an active-site residue.

The protein belongs to the Maf family. YhdE subfamily. A divalent metal cation is required as a cofactor.

It is found in the cytoplasm. The enzyme catalyses dTTP + H2O = dTMP + diphosphate + H(+). The catalysed reaction is UTP + H2O = UMP + diphosphate + H(+). Its function is as follows. Nucleoside triphosphate pyrophosphatase that hydrolyzes dTTP and UTP. May have a dual role in cell division arrest and in preventing the incorporation of modified nucleotides into cellular nucleic acids. The protein is dTTP/UTP pyrophosphatase of Burkholderia thailandensis (strain ATCC 700388 / DSM 13276 / CCUG 48851 / CIP 106301 / E264).